We begin with the raw amino-acid sequence, 490 residues long: GTPase Der (490 aa).

2 EngA-type G domains span residues 3–166 and 203–376; these read PVVA…VDEI and IKLA…DSST. GTP contacts are provided by residues 9 to 16, 56 to 60, 118 to 121, 209 to 216, 256 to 260, and 321 to 324; these read GRPNVGKS, DTGGI, NKTD, DTAGV, and NKWD. The region spanning 377-461 is the KH-like domain; sequence RRQSTAMLTR…PIRIQFKEGE (85 aa).

This sequence belongs to the TRAFAC class TrmE-Era-EngA-EngB-Septin-like GTPase superfamily. EngA (Der) GTPase family. As to quaternary structure, associates with the 50S ribosomal subunit.

Functionally, GTPase that plays an essential role in the late steps of ribosome biogenesis. This chain is GTPase Der, found in Enterobacter sp. (strain 638).